Reading from the N-terminus, the 43-residue chain is KYYGNGVSCNKKGCSVDWGKAIGIIGNNSAANLATGGAAGWSK.

Cys9 and Cys14 are disulfide-bonded.

This bacteriocin inhibits the growth of several Gram-positive bacteria, especially pathogenic L.monocytogenes and C.botulinum but has no effect on the growth of a number of yeasts and Gram-negative bacteria. This is Bacteriocin mundticin from Enterococcus mundtii.